The sequence spans 182 residues: Ribosome-recycling factor (182 aa).

The protein belongs to the RRF family.

It is found in the cytoplasm. Responsible for the release of ribosomes from messenger RNA at the termination of protein biosynthesis. May increase the efficiency of translation by recycling ribosomes from one round of translation to another. This Prochlorococcus marinus (strain MIT 9312) protein is Ribosome-recycling factor.